Reading from the N-terminus, the 508-residue chain is ATP synthase subunit alpha, chloroplastic (508 aa).

An ATP-binding site is contributed by 170–177; the sequence is GDRQTGKT.

This sequence belongs to the ATPase alpha/beta chains family. F-type ATPases have 2 components, CF(1) - the catalytic core - and CF(0) - the membrane proton channel. CF(1) has five subunits: alpha(3), beta(3), gamma(1), delta(1), epsilon(1). CF(0) has four main subunits: a, b, b' and c.

The protein resides in the plastid. It localises to the chloroplast thylakoid membrane. The enzyme catalyses ATP + H2O + 4 H(+)(in) = ADP + phosphate + 5 H(+)(out). Functionally, produces ATP from ADP in the presence of a proton gradient across the membrane. The alpha chain is a regulatory subunit. The polypeptide is ATP synthase subunit alpha, chloroplastic (Helianthus annuus (Common sunflower)).